A 149-amino-acid polypeptide reads, in one-letter code: 3-hydroxyacyl-[acyl-carrier-protein] dehydratase FabZ (149 aa).

H47 is a catalytic residue.

The protein belongs to the thioester dehydratase family. FabZ subfamily.

Its subcellular location is the cytoplasm. It carries out the reaction a (3R)-hydroxyacyl-[ACP] = a (2E)-enoyl-[ACP] + H2O. Its function is as follows. Involved in unsaturated fatty acids biosynthesis. Catalyzes the dehydration of short chain beta-hydroxyacyl-ACPs and long chain saturated and unsaturated beta-hydroxyacyl-ACPs. This is 3-hydroxyacyl-[acyl-carrier-protein] dehydratase FabZ from Thioalkalivibrio sulfidiphilus (strain HL-EbGR7).